The chain runs to 254 residues: Probable derlin-2 homolog (254 aa).

The Cytoplasmic segment spans residues 1–17 (MAQPFEDWYKNLPIVTK). A helical membrane pass occupies residues 18–38 (IYMTGCVVTSVSVYLGLVGPL). Over 39–95 (RLYLNFPLVFGKYEFWRLFTNFFFYDEIGMNFFFHMYFLVRHSRLLEESSFRGRSAD) the chain is Lumenal. Residues 96 to 116 (YLFMWIFGSFLLLIMDAFLFY) form a helical membrane-spanning segment. At 117-118 (TK) the chain is on the cytoplasmic side. The chain crosses the membrane as a helical span at residues 119 to 139 (IVTKVLFLAPSIAFMVIYVWS). Residues 140 to 146 (RRNPNMH) lie on the Lumenal side of the membrane. The helical transmembrane segment at 147–167 (ISFLGLFTFSAPYLPWVILIM) threads the bilayer. Over 168–254 (GYLFNHDLTT…FLNEDDLDQQ (87 aa)) the chain is Cytoplasmic.

Belongs to the derlin family.

The protein resides in the endoplasmic reticulum membrane. Functionally, may be involved in the degradation process of specific misfolded endoplasmic reticulum (ER) luminal proteins. May also be involved in endoplasmic reticulum stress-induced pre-emptive quality control, a mechanism that selectively attenuates the translocation of newly synthesized proteins into the endoplasmic reticulum and reroutes them to the cytosol for proteasomal degradation. This is Probable derlin-2 homolog (derl2) from Dictyostelium discoideum (Social amoeba).